The chain runs to 417 residues: UDP-N-acetylglucosamine 1-carboxyvinyltransferase (417 aa).

Phosphoenolpyruvate is bound at residue 22–23 (KN). Arginine 92 provides a ligand contact to UDP-N-acetyl-alpha-D-glucosamine. Catalysis depends on cysteine 116, which acts as the Proton donor. At cysteine 116 the chain carries 2-(S-cysteinyl)pyruvic acid O-phosphothioketal. UDP-N-acetyl-alpha-D-glucosamine is bound by residues 161–164 (KVSV), aspartate 305, and isoleucine 327.

This sequence belongs to the EPSP synthase family. MurA subfamily.

The protein localises to the cytoplasm. The catalysed reaction is phosphoenolpyruvate + UDP-N-acetyl-alpha-D-glucosamine = UDP-N-acetyl-3-O-(1-carboxyvinyl)-alpha-D-glucosamine + phosphate. The protein operates within cell wall biogenesis; peptidoglycan biosynthesis. In terms of biological role, cell wall formation. Adds enolpyruvyl to UDP-N-acetylglucosamine. The chain is UDP-N-acetylglucosamine 1-carboxyvinyltransferase from Pelagibacter ubique (strain HTCC1062).